The chain runs to 2149 residues: Oxygen-regulated protein 1 (2149 aa).

Polar residues predominate over residues M1 to Q20. A disordered region spans residues M1 to R25. Residues K36–D118 enclose the Doublecortin 1 domain. Residues W127–P148 form a disordered region. In terms of domain architecture, Doublecortin 2 spans R152 to D231. 3 disordered regions span residues V351–S373, M1435–R1456, and V1583–L1613. The segment covering S1446–R1456 has biased composition (polar residues).

Interacts (via the doublecortin domains) with microtubules. Interacts with RP1L1. Interacts with MAK.

It is found in the cytoplasm. The protein localises to the cytoskeleton. The protein resides in the cilium axoneme. It localises to the cell projection. Its subcellular location is the cilium. It is found in the photoreceptor outer segment. In terms of biological role, microtubule-associated protein regulating the stability and length of the microtubule-based axoneme of photoreceptors. Required for the differentiation of photoreceptor cells, it plays a role in the organization of the outer segment of rod and cone photoreceptors ensuring the correct orientation and higher-order stacking of outer segment disks along the photoreceptor axoneme. This is Oxygen-regulated protein 1 (RP1) from Saimiri boliviensis boliviensis (Bolivian squirrel monkey).